The sequence spans 318 residues: D-alanine--D-alanine ligase (318 aa).

The ATP-grasp domain occupies 116-315; sequence KQVWQSLGLP…FEQLSLAVLA (200 aa). ATP is bound at residue 146–201; that stretch reads MSRLGDLVMVKPAQEGSSIGMAKVSNAQQLAAAIQQAFEYDDKVLLEQFIQGSEYT. D269, E282, and N284 together coordinate Mg(2+).

This sequence belongs to the D-alanine--D-alanine ligase family. Mg(2+) serves as cofactor. The cofactor is Mn(2+).

The protein resides in the cytoplasm. The enzyme catalyses 2 D-alanine + ATP = D-alanyl-D-alanine + ADP + phosphate + H(+). It participates in cell wall biogenesis; peptidoglycan biosynthesis. Its function is as follows. Cell wall formation. In Pseudoalteromonas atlantica (strain T6c / ATCC BAA-1087), this protein is D-alanine--D-alanine ligase.